Consider the following 728-residue polypeptide: 1,4-alpha-glucan branching enzyme GlgB (728 aa).

The active-site Nucleophile is the D405. Residue E458 is the Proton donor of the active site.

It belongs to the glycosyl hydrolase 13 family. GlgB subfamily. As to quaternary structure, monomer.

The enzyme catalyses Transfers a segment of a (1-&gt;4)-alpha-D-glucan chain to a primary hydroxy group in a similar glucan chain.. Its pathway is glycan biosynthesis; glycogen biosynthesis. Its function is as follows. Catalyzes the formation of the alpha-1,6-glucosidic linkages in glycogen by scission of a 1,4-alpha-linked oligosaccharide from growing alpha-1,4-glucan chains and the subsequent attachment of the oligosaccharide to the alpha-1,6 position. This is 1,4-alpha-glucan branching enzyme GlgB from Salmonella paratyphi B (strain ATCC BAA-1250 / SPB7).